A 202-amino-acid polypeptide reads, in one-letter code: Recombination protein RecR (202 aa).

Residues C61 to C76 form a C4-type zinc finger. A Toprim domain is found at S84–P179.

Belongs to the RecR family.

In terms of biological role, may play a role in DNA repair. It seems to be involved in an RecBC-independent recombinational process of DNA repair. It may act with RecF and RecO. The chain is Recombination protein RecR from Bordetella petrii (strain ATCC BAA-461 / DSM 12804 / CCUG 43448).